Consider the following 222-residue polypeptide: Capsular polysaccharide type 5 biosynthesis protein cap5A (222 aa).

2 helical membrane-spanning segments follow: residues 20–40 (ILII…FFVL) and 172–192 (VVNL…YIFF).

The protein belongs to the CpsC/CapA family.

It is found in the cell membrane. In terms of biological role, required for the biosynthesis of type 5 capsular polysaccharide (Cap5/CP5). Might act as the chain-length regulator. The sequence is that of Capsular polysaccharide type 5 biosynthesis protein cap5A (cap5A) from Staphylococcus aureus (strain Newman).